The sequence spans 172 residues: C-phycocyanin beta subunit (172 aa).

An N4-methylasparagine modification is found at Asn-72. (2R,3E)-phycocyanobilin contacts are provided by Cys-82 and Cys-153.

This sequence belongs to the phycobiliprotein family. Heterodimer of an alpha and a beta subunit, which further assembles into trimers and the trimers into hexamers. Contains two covalently linked bilin chromophores.

It localises to the cellular thylakoid membrane. In terms of biological role, light-harvesting photosynthetic bile pigment-protein from the phycobiliprotein complex (phycobilisome, PBS). Phycocyanin is the major phycobiliprotein in the PBS rod. This Synechocystis sp. (strain PCC 6701) protein is C-phycocyanin beta subunit (cpcB).